We begin with the raw amino-acid sequence, 234 residues long: tRNA (guanine-N(1)-)-methyltransferase (234 aa).

Residues Gly115 and 135–140 (VGDYIL) contribute to the S-adenosyl-L-methionine site.

Belongs to the RNA methyltransferase TrmD family. Homodimer.

The protein localises to the cytoplasm. It carries out the reaction guanosine(37) in tRNA + S-adenosyl-L-methionine = N(1)-methylguanosine(37) in tRNA + S-adenosyl-L-homocysteine + H(+). Functionally, specifically methylates guanosine-37 in various tRNAs. The sequence is that of tRNA (guanine-N(1)-)-methyltransferase from Rickettsia akari (strain Hartford).